The following is a 190-amino-acid chain: Myosin, light chain 1, alkali; skeletal, fast (190 aa).

Residues 1 to 17 (MAPKKDAKKPEPPKKAE) show a composition bias toward basic and acidic residues. The tract at residues 1-33 (MAPKKDAKKPEPPKKAEPAPAPAPAPEPPKADA) is disordered. The segment covering 19-28 (APAPAPAPEP) has biased composition (pro residues). EF-hand domains are found at residues 46–81 (DQMEDYREAFLLFDRVGDSKVAYNQIADIMRALGQN) and 123–158 (ATYDDYVEGLRVFDKEGNGTVMGAELRIVLSTLGEK).

Myosin is a hexamer of 2 heavy chains and 4 light chains. Does not bind calcium. Expressed in fast muscle fibers during skeletal muscle differentiation.

Non-regulatory myosin light chain required for proper formation and/or maintenance of myofibers, and thus appropriate muscle function. This is Myosin, light chain 1, alkali; skeletal, fast from Danio rerio (Zebrafish).